The following is a 152-amino-acid chain: Small ribosomal subunit protein uS13 (152 aa).

The interval 133–152 (GQHTKTTGRRGRTVGVSKKK) is disordered.

It belongs to the universal ribosomal protein uS13 family.

The protein localises to the cytoplasm. Its function is as follows. Located at the top of the head of the 40S subunit, it contacts several helices of the 18S rRNA. In Spodoptera frugiperda (Fall armyworm), this protein is Small ribosomal subunit protein uS13 (RpS18).